A 445-amino-acid chain; its full sequence is MRRSKQGAEGKAEKKAARSAGVCRTTLPGGLRVVTEHLPAVRSASVGVWVGVGSRDEGATVAGAAHFLEHLLFKSTSTRTAMDIAQAIDAVGGELNAFTAKEHTCYYAHVLDSDLELAVDLVADVVLNGRCAVDDVELERDVVLEEIAMRDDDPEDALGDMFLAALFGDHPVGRPVIGTMESVSAMTRTQLHSFHVRRYTPERMVVAVAGNVDHDEMVALVREHFGSRLIRGRQSAPPRKSTGRINGGPALTLGKRDAEQTHVLLGVRTPGRSWEHRWALSVLHTALGGGLSSRLFQEIRETRGLAYSVYSALDIFADSGALSVYAACLPGRFADVMQVISEVLASVAGDGITEAECRIAKGSLRGGIILGLEDSNSWMSRLGRSELNYGKYRGIEHTLQQIDEVTVEQVNALAHQLLNKRYGAAVLGPYASKKTLPRQLRIMVN.

A Zn(2+)-binding site is contributed by His66. Catalysis depends on Glu69, which acts as the Proton acceptor. Residues His70 and Glu146 each coordinate Zn(2+). Residues Gly232–Leu251 form a disordered region.

Belongs to the peptidase M16 family. Requires Zn(2+) as cofactor.

This is an uncharacterized protein from Mycobacterium leprae (strain TN).